The following is a 258-amino-acid chain: Imidazole glycerol phosphate synthase subunit HisF (258 aa).

Active-site residues include aspartate 11 and aspartate 130.

The protein belongs to the HisA/HisF family. As to quaternary structure, heterodimer of HisH and HisF.

The protein resides in the cytoplasm. It catalyses the reaction 5-[(5-phospho-1-deoxy-D-ribulos-1-ylimino)methylamino]-1-(5-phospho-beta-D-ribosyl)imidazole-4-carboxamide + L-glutamine = D-erythro-1-(imidazol-4-yl)glycerol 3-phosphate + 5-amino-1-(5-phospho-beta-D-ribosyl)imidazole-4-carboxamide + L-glutamate + H(+). It functions in the pathway amino-acid biosynthesis; L-histidine biosynthesis; L-histidine from 5-phospho-alpha-D-ribose 1-diphosphate: step 5/9. Functionally, IGPS catalyzes the conversion of PRFAR and glutamine to IGP, AICAR and glutamate. The HisF subunit catalyzes the cyclization activity that produces IGP and AICAR from PRFAR using the ammonia provided by the HisH subunit. This chain is Imidazole glycerol phosphate synthase subunit HisF, found in Methylorubrum extorquens (strain PA1) (Methylobacterium extorquens).